The primary structure comprises 720 residues: Pro-neuregulin-3, membrane-bound isoform (720 aa).

Topologically, residues 1–360 (MSEGAAAASP…MESEEVYQRQ (360 aa)) are extracellular. Disordered stretches follow at residues 28–48 (AAAAAAAGGGPDGGGEGAAEP), 119–223 (SSFP…AMPS), and 246–280 (PFQDAASSSSSSSSSATTTTPETSTSPKFHTTTYS). Gly residues predominate over residues 34–44 (AGGGPDGGGEG). The segment covering 127-148 (TTTTTTSTTSPATPSAGGAASS) has biased composition (low complexity). Over residues 149-163 (RTPNRISTRLTTITR) the composition is skewed to polar residues. 2 stretches are compositionally biased toward low complexity: residues 187 to 205 (TAAPATVPSTTAPFFSSST) and 250 to 271 (AASSSSSSSSSATTTTPETSTS). The 44-residue stretch at 286-329 (HFKPCRDKDLAYCLNDGECFVIETLTGSHKHCRCKEGYQGVRCD) folds into the EGF-like domain. Intrachain disulfides connect Cys290/Cys304, Cys298/Cys317, and Cys319/Cys328. The helical transmembrane segment at 361 to 381 (VLSISCIIFGIVIVGMFCAAF) threads the bilayer. Topologically, residues 382-720 (YFKSKKQAKQ…EIQRDSALTK (339 aa)) are cytoplasmic. The interval 451–481 (PQSFPEVPSPDRGSQSVKHHRSLSSCCSPGQ) is disordered.

The protein belongs to the neuregulin family. In terms of assembly, interacts with ERBB4. Post-translationally, proteolytic cleavage close to the plasma membrane on the external face leads to the release of the soluble growth factor form. In terms of processing, extensive glycosylation precedes the proteolytic cleavage. Isoform 3 is glycosylated. In terms of tissue distribution, highly expressed in most regions of the brain with the exception of corpus callosum. Expressed at lower level in testis. Not detected in heart, placenta, lung, liver, skeletal muscle, kidney, pancreas, spleen, thymus, prostate, ovary, small intestine, colon and peripheral blood leukocytes.

It localises to the cell membrane. The protein localises to the secreted. Its function is as follows. Direct ligand for the ERBB4 tyrosine kinase receptor. Binding results in ligand-stimulated tyrosine phosphorylation and activation of the receptor. Does not bind to the EGF receptor, ERBB2 or ERBB3 receptors. May be a survival factor for oligodendrocytes. The protein is Pro-neuregulin-3, membrane-bound isoform (NRG3) of Homo sapiens (Human).